Consider the following 609-residue polypeptide: Proteasome-associated ATPase (609 aa).

Residues 1-24 (MGESERSEAFGIPRDSPLSSGDAA) form a disordered region. The stretch at 20–96 (SGDAAELEQL…LREEVDRLGQ (77 aa)) forms a coiled coil. 296-301 (GCGKTL) contacts ATP. The segment at 608–609 (YL) is docks into pockets in the proteasome alpha-ring.

Belongs to the AAA ATPase family. Homohexamer. Assembles into a hexameric ring structure that caps the 20S proteasome core. Strongly interacts with the prokaryotic ubiquitin-like protein Pup through a hydrophobic interface; the interacting region of ARC lies in its N-terminal coiled-coil domain. There is one Pup binding site per ARC hexamer ring. Upon ATP-binding, the C-terminus of ARC interacts with the alpha-rings of the proteasome core, possibly by binding to the intersubunit pockets.

The protein operates within protein degradation; proteasomal Pup-dependent pathway. In terms of biological role, ATPase which is responsible for recognizing, binding, unfolding and translocation of pupylated proteins into the bacterial 20S proteasome core particle. May be essential for opening the gate of the 20S proteasome via an interaction with its C-terminus, thereby allowing substrate entry and access to the site of proteolysis. Thus, the C-termini of the proteasomal ATPase may function like a 'key in a lock' to induce gate opening and therefore regulate proteolysis. The polypeptide is Proteasome-associated ATPase (Mycobacterium bovis (strain BCG / Pasteur 1173P2)).